The primary structure comprises 595 residues: Sulfite reductase [NADPH] flavoprotein alpha-component (595 aa).

The Flavodoxin-like domain maps to 59-197; it reads ITVLSASQTG…KADIWRREIV (139 aa). Residues 65–70, 112–115, and 148–157 each bind FMN; these read SQTGNA, STQG, and LGDSSYTYFA. One can recognise an FAD-binding FR-type domain in the interval 230 to 444; that stretch reads EEPFTAHLVV…IEHNDNFRLP (215 aa). FAD is bound by residues T318, F352, 382–385, 400–402, Y406, and 415–418; these read RLYS, TVS, and GGAS. NADP(+) is bound by residues 515 to 516, 521 to 525, and D557; these read SQ and KIYVQ. FAD is bound at residue Y595.

Belongs to the NADPH-dependent sulphite reductase flavoprotein subunit CysJ family. It in the N-terminal section; belongs to the flavodoxin family. The protein in the C-terminal section; belongs to the flavoprotein pyridine nucleotide cytochrome reductase family. Alpha(8)-beta(8). The alpha component is a flavoprotein, the beta component is a hemoprotein. It depends on FAD as a cofactor. The cofactor is FMN.

The enzyme catalyses hydrogen sulfide + 3 NADP(+) + 3 H2O = sulfite + 3 NADPH + 4 H(+). The protein operates within sulfur metabolism; hydrogen sulfide biosynthesis; hydrogen sulfide from sulfite (NADPH route): step 1/1. Functionally, component of the sulfite reductase complex that catalyzes the 6-electron reduction of sulfite to sulfide. This is one of several activities required for the biosynthesis of L-cysteine from sulfate. The flavoprotein component catalyzes the electron flow from NADPH -&gt; FAD -&gt; FMN to the hemoprotein component. The chain is Sulfite reductase [NADPH] flavoprotein alpha-component from Baumannia cicadellinicola subsp. Homalodisca coagulata.